The primary structure comprises 906 residues: Catenin alpha-1 (906 aa).

At threonine 2 the chain carries N-acetylthreonine. The interval 2–228 is involved in homodimerization; that stretch reads TAVHAGNINF…PILYTASQAC (227 aa). Lysine 57 is covalently cross-linked (Glycyl lysine isopeptide (Lys-Gly) (interchain with G-Cter in SUMO2)). The segment at 97–148 is interaction with JUP and CTNNB1; the sequence is VRKQGDLMKAAAGEFADDPCSSVKRGNMVRAARALLSAVTRLLILADMADVY. Residues serine 264, serine 268, serine 295, and serine 297 each carry the phosphoserine modification. An interaction with alpha-actinin region spans residues 325–394; the sequence is TRDDRRERIV…AVMDHVSDSF (70 aa). Threonine 634 bears the Phosphothreonine mark. A Phosphoserine; by CK2 modification is found at serine 641. Residue threonine 645 is modified to Phosphothreonine. Phosphoserine; by CK1 occurs at positions 652 and 655. The residue at position 658 (threonine 658) is a Phosphothreonine; by CK1. A Glycyl lysine isopeptide (Lys-Gly) (interchain with G-Cter in SUMO2) cross-link involves residue lysine 797. Serine 851 carries the post-translational modification Phosphoserine. A compositionally biased stretch (basic and acidic residues) spans 864-880; sequence PEKKPLVKREKQDETQT. Residues 864–894 form a disordered region; the sequence is PEKKPLVKREKQDETQTKIKRASQKKHVNPV. The span at 881 to 891 shows a compositional bias: basic residues; the sequence is KIKRASQKKHV.

The protein belongs to the vinculin/alpha-catenin family. In terms of assembly, monomer and homodimer; the monomer preferentially binds to CTNNB1 and the homodimer to actin. Component of an cadherin:catenin adhesion complex composed of at least of CDH26, beta-catenin/CTNNB1, alpha-catenin/CTNNA1 and p120 catenin/CTNND1. Possible component of an E-cadherin/ catenin adhesion complex together with E-cadherin/CDH1 and beta-catenin/CTNNB1 or gamma-catenin/JUP; the complex is located to adherens junctions. The stable association of CTNNA1 is controversial as CTNNA1 was shown not to bind to F-actin when assembled in the complex. Alternatively, the CTNNA1-containing complex may be linked to F-actin by other proteins such as LIMA1. Binds AFDN and F-actin. Interacts with ARHGAP21. Interacts with AJUBA. Interacts with LIMA1. Interacts with vinculin/VCL. Interacts with TJP2/ZO2 (via N-terminus). Interacts with TJP1/ZO1 (via N-terminus). Sumoylated. Post-translationally, phosphorylation seems to contribute to the strength of cell-cell adhesion rather than to the basic capacity for cell-cell adhesion. As to expression, ubiquitously expressed in normal tissues. In terms of tissue distribution, abundantly expressed in brain and cerebellum, also expressed in the placenta, liver, lung, colon, heart, pancreas, stomach and thymus.

The protein resides in the cytoplasm. The protein localises to the cytoskeleton. It localises to the cell junction. Its subcellular location is the adherens junction. It is found in the cell membrane. The protein resides in the nucleus. Functionally, associates with the cytoplasmic domain of a variety of cadherins. The association of catenins to cadherins produces a complex which is linked to the actin filament network, and which seems to be of primary importance for cadherins cell-adhesion properties. Can associate with both E- and N-cadherins. Originally believed to be a stable component of E-cadherin/catenin adhesion complexes and to mediate the linkage of cadherins to the actin cytoskeleton at adherens junctions. In contrast, cortical actin was found to be much more dynamic than E-cadherin/catenin complexes and CTNNA1 was shown not to bind to F-actin when assembled in the complex suggesting a different linkage between actin and adherens junctions components. The homodimeric form may regulate actin filament assembly and inhibit actin branching by competing with the Arp2/3 complex for binding to actin filaments. Involved in the regulation of WWTR1/TAZ, YAP1 and TGFB1-dependent SMAD2 and SMAD3 nuclear accumulation. May play a crucial role in cell differentiation. The polypeptide is Catenin alpha-1 (Homo sapiens (Human)).